The following is a 239-amino-acid chain: Peptidase E (239 aa).

Catalysis depends on charge relay system residues Ser-122, Asp-137, and His-159.

Belongs to the peptidase S51 family.

The protein resides in the cytoplasm. The catalysed reaction is Dipeptidase E catalyzes the hydrolysis of dipeptides Asp-|-Xaa. It does not act on peptides with N-terminal Glu, Asn or Gln, nor does it cleave isoaspartyl peptides.. Hydrolyzes dipeptides containing N-terminal aspartate residues. May play a role in allowing the cell to use peptide aspartate to spare carbon otherwise required for the synthesis of the aspartate family of amino acids. The sequence is that of Peptidase E from Shewanella baltica (strain OS195).